The following is a 229-amino-acid chain: Enolase-phosphatase E1 (229 aa).

This sequence belongs to the HAD-like hydrolase superfamily. MasA/MtnC family. Monomer. The cofactor is Mg(2+).

It carries out the reaction 5-methylsulfanyl-2,3-dioxopentyl phosphate + H2O = 1,2-dihydroxy-5-(methylsulfanyl)pent-1-en-3-one + phosphate. Its pathway is amino-acid biosynthesis; L-methionine biosynthesis via salvage pathway; L-methionine from S-methyl-5-thio-alpha-D-ribose 1-phosphate: step 3/6. It functions in the pathway amino-acid biosynthesis; L-methionine biosynthesis via salvage pathway; L-methionine from S-methyl-5-thio-alpha-D-ribose 1-phosphate: step 4/6. In terms of biological role, bifunctional enzyme that catalyzes the enolization of 2,3-diketo-5-methylthiopentyl-1-phosphate (DK-MTP-1-P) into the intermediate 2-hydroxy-3-keto-5-methylthiopentenyl-1-phosphate (HK-MTPenyl-1-P), which is then dephosphorylated to form the acireductone 1,2-dihydroxy-3-keto-5-methylthiopentene (DHK-MTPene). This Enterobacter sp. (strain 638) protein is Enolase-phosphatase E1.